The chain runs to 198 residues: Peptidyl-tRNA hydrolase (198 aa).

Tyrosine 15 is a binding site for tRNA. Histidine 20 (proton acceptor) is an active-site residue. Residues phenylalanine 65, asparagine 67, and asparagine 113 each contribute to the tRNA site.

The protein belongs to the PTH family. In terms of assembly, monomer.

It is found in the cytoplasm. The enzyme catalyses an N-acyl-L-alpha-aminoacyl-tRNA + H2O = an N-acyl-L-amino acid + a tRNA + H(+). In terms of biological role, hydrolyzes ribosome-free peptidyl-tRNAs (with 1 or more amino acids incorporated), which drop off the ribosome during protein synthesis, or as a result of ribosome stalling. Functionally, catalyzes the release of premature peptidyl moieties from peptidyl-tRNA molecules trapped in stalled 50S ribosomal subunits, and thus maintains levels of free tRNAs and 50S ribosomes. This Ehrlichia chaffeensis (strain ATCC CRL-10679 / Arkansas) protein is Peptidyl-tRNA hydrolase.